Reading from the N-terminus, the 120-residue chain is Large ribosomal subunit protein uL18 (120 aa).

It belongs to the universal ribosomal protein uL18 family. As to quaternary structure, part of the 50S ribosomal subunit; part of the 5S rRNA/L5/L18/L25 subcomplex. Contacts the 5S and 23S rRNAs.

In terms of biological role, this is one of the proteins that bind and probably mediate the attachment of the 5S RNA into the large ribosomal subunit, where it forms part of the central protuberance. The chain is Large ribosomal subunit protein uL18 from Macrococcus caseolyticus (strain JCSC5402) (Macrococcoides caseolyticum).